We begin with the raw amino-acid sequence, 113 residues long: Small ribosomal subunit protein uS14m (113 aa).

Belongs to the universal ribosomal protein uS14 family. As to quaternary structure, component of the mitochondrial small ribosomal subunit (mt-SSU). Mature N.crassa 74S mitochondrial ribosomes consist of a small (37S) and a large (54S) subunit. The 37S small subunit contains a 16S ribosomal RNA (16S mt-rRNA) and 32 different proteins. The 54S large subunit contains a 23S rRNA (23S mt-rRNA) and 42 different proteins.

It localises to the mitochondrion. Its function is as follows. Component of the mitochondrial ribosome (mitoribosome), a dedicated translation machinery responsible for the synthesis of mitochondrial genome-encoded proteins, including at least some of the essential transmembrane subunits of the mitochondrial respiratory chain. The mitoribosomes are attached to the mitochondrial inner membrane and translation products are cotranslationally integrated into the membrane. The chain is Small ribosomal subunit protein uS14m (mrp2) from Neurospora crassa (strain ATCC 24698 / 74-OR23-1A / CBS 708.71 / DSM 1257 / FGSC 987).